The sequence spans 117 residues: UPF0102 protein RHOS4_03930 (117 aa).

It belongs to the UPF0102 family.

The sequence is that of UPF0102 protein RHOS4_03930 from Cereibacter sphaeroides (strain ATCC 17023 / DSM 158 / JCM 6121 / CCUG 31486 / LMG 2827 / NBRC 12203 / NCIMB 8253 / ATH 2.4.1.) (Rhodobacter sphaeroides).